We begin with the raw amino-acid sequence, 448 residues long: Tapasin (448 aa).

Positions 1 to 20 (MKSLSLLLAVALGLATAVSA) are cleaved as a signal peptide. Topologically, residues 21–414 (GPAVIECWFV…LSGPSLEDSV (394 aa)) are lumenal. An intrachain disulfide couples C27 to C91. An N-linked (GlcNAc...) asparagine glycan is attached at N253. Residues 292–399 (PKVSLMPATL…PASGRSAEVT (108 aa)) form the Ig-like C1-type domain. A disulfide bond links C315 and C382. The helical transmembrane segment at 415–435 (GLFLSAFLLLGLFKALGWAAV) threads the bilayer. The Cytoplasmic portion of the chain corresponds to 436–448 (YLSTCKDSKKKAE).

In terms of assembly, heterodimer with PDIA3; disulfide-linked. Obligatory mediator for the interaction between newly assembled MHC class I molecules, calreticulin, PDIA3 and TAP. Up to 4 MHC class I/tapasin complexes bind to 1 TAP. Interacts with HLA-G-B2M complex; this interaction is required for loading of high affinity peptides. On its own or as part of MHC class I peptide loading complex, interacts with ligand-free MR1 or MR1-B2M complex, providing for stable MR1 pools ready for metabolite antigen processing. In terms of tissue distribution, neutrophils, mostly in fully differentiated cells.

The protein localises to the endoplasmic reticulum membrane. Involved in the association of MHC class I with transporter associated with antigen processing (TAP) and in the assembly of MHC class I with peptide (peptide loading). This chain is Tapasin, found in Homo sapiens (Human).